Here is a 91-residue protein sequence, read N- to C-terminus: ATP synthase subunit c (91 aa).

Transmembrane regions (helical) follow at residues 4 to 24 and 53 to 73; these read FTMC…GTGI and IGLA…LIIL.

This sequence belongs to the ATPase C chain family. In terms of assembly, F-type ATPases have 2 components, F(1) - the catalytic core - and F(0) - the membrane proton channel. F(1) has five subunits: alpha(3), beta(3), gamma(1), delta(1), epsilon(1). F(0) has three main subunits: a(1), b(2) and c(10-14). The alpha and beta chains form an alternating ring which encloses part of the gamma chain. F(1) is attached to F(0) by a central stalk formed by the gamma and epsilon chains, while a peripheral stalk is formed by the delta and b chains.

It is found in the cell inner membrane. F(1)F(0) ATP synthase produces ATP from ADP in the presence of a proton or sodium gradient. F-type ATPases consist of two structural domains, F(1) containing the extramembraneous catalytic core and F(0) containing the membrane proton channel, linked together by a central stalk and a peripheral stalk. During catalysis, ATP synthesis in the catalytic domain of F(1) is coupled via a rotary mechanism of the central stalk subunits to proton translocation. Its function is as follows. Key component of the F(0) channel; it plays a direct role in translocation across the membrane. A homomeric c-ring of between 10-14 subunits forms the central stalk rotor element with the F(1) delta and epsilon subunits. This chain is ATP synthase subunit c, found in Geotalea daltonii (strain DSM 22248 / JCM 15807 / FRC-32) (Geobacter daltonii).